The following is a 131-amino-acid chain: Probable calcium-binding protein CML34 (131 aa).

EF-hand domains are found at residues 1–33, 34–69, 70–97, and 98–131; these read MSAKRVFEKFDKNKDGKLSLDEFREVALAFSPY, FTQEDIVKFFEEIDVDGNGELNADEFTSCIEKMLKE, VFVFCDVDGDGKIPASESYVTMTSLGKK, and FTEETSAEKVRAADVDGDGYLNFDEFMALVIGDI. Asp11, Asn13, Asp15, Lys17, Glu22, Asp47, Asp49, Asn51, Glu53, and Glu58 together coordinate Ca(2+). The Ca(2+) site is built by Asp111, Asp113, Asp115, Tyr117, and Glu122.

In terms of biological role, potential calcium sensor. The protein is Probable calcium-binding protein CML34 (CML34) of Arabidopsis thaliana (Mouse-ear cress).